The primary structure comprises 372 residues: Glutamate 5-kinase (372 aa).

An ATP-binding site is contributed by Lys14. Substrate-binding residues include Ser54, Asp141, and Asn153. 173-174 provides a ligand contact to ATP; the sequence is TD. A PUA domain is found at 280–358; sequence RGTLVLDEGA…DAIVGVLGYM (79 aa).

This sequence belongs to the glutamate 5-kinase family.

Its subcellular location is the cytoplasm. It carries out the reaction L-glutamate + ATP = L-glutamyl 5-phosphate + ADP. It functions in the pathway amino-acid biosynthesis; L-proline biosynthesis; L-glutamate 5-semialdehyde from L-glutamate: step 1/2. Its function is as follows. Catalyzes the transfer of a phosphate group to glutamate to form L-glutamate 5-phosphate. The protein is Glutamate 5-kinase of Pseudomonas fluorescens (strain ATCC BAA-477 / NRRL B-23932 / Pf-5).